Here is a 202-residue protein sequence, read N- to C-terminus: Holliday junction branch migration complex subunit RuvA (202 aa).

The interval 1-64 (MIGRLSGTLL…EDAHLLFGFA (64 aa)) is domain I. The domain II stretch occupies residues 65-143 (GRAERELFRQ…SLPSADLLSP (79 aa)). The flexible linker stretch occupies residues 144–152 (APAAGAALL). The domain III stretch occupies residues 153-202 (VENDERADISQALQALGYSAREAEAALKSVPDGTDVATGIRLALKALARP).

This sequence belongs to the RuvA family. Homotetramer. Forms an RuvA(8)-RuvB(12)-Holliday junction (HJ) complex. HJ DNA is sandwiched between 2 RuvA tetramers; dsDNA enters through RuvA and exits via RuvB. An RuvB hexamer assembles on each DNA strand where it exits the tetramer. Each RuvB hexamer is contacted by two RuvA subunits (via domain III) on 2 adjacent RuvB subunits; this complex drives branch migration. In the full resolvosome a probable DNA-RuvA(4)-RuvB(12)-RuvC(2) complex forms which resolves the HJ.

Its subcellular location is the cytoplasm. In terms of biological role, the RuvA-RuvB-RuvC complex processes Holliday junction (HJ) DNA during genetic recombination and DNA repair, while the RuvA-RuvB complex plays an important role in the rescue of blocked DNA replication forks via replication fork reversal (RFR). RuvA specifically binds to HJ cruciform DNA, conferring on it an open structure. The RuvB hexamer acts as an ATP-dependent pump, pulling dsDNA into and through the RuvAB complex. HJ branch migration allows RuvC to scan DNA until it finds its consensus sequence, where it cleaves and resolves the cruciform DNA. This is Holliday junction branch migration complex subunit RuvA from Laribacter hongkongensis (strain HLHK9).